A 436-amino-acid polypeptide reads, in one-letter code: 3-ketoacyl-CoA thiolase (436 aa).

C99 serves as the catalytic Acyl-thioester intermediate. Residues H392 and C422 each act as proton acceptor in the active site.

Belongs to the thiolase-like superfamily. Thiolase family. In terms of assembly, heterotetramer of two alpha chains (FadJ) and two beta chains (FadI).

The protein localises to the cytoplasm. The catalysed reaction is an acyl-CoA + acetyl-CoA = a 3-oxoacyl-CoA + CoA. It functions in the pathway lipid metabolism; fatty acid beta-oxidation. Its function is as follows. Catalyzes the final step of fatty acid oxidation in which acetyl-CoA is released and the CoA ester of a fatty acid two carbons shorter is formed. The chain is 3-ketoacyl-CoA thiolase from Shewanella loihica (strain ATCC BAA-1088 / PV-4).